We begin with the raw amino-acid sequence, 324 residues long: Disintegrin-like/cysteine-rich protein MPIII-3 (324 aa).

An N-terminal signal peptide occupies residues 1–20; it reads MIQVLLVIICLAVFPYQVSS. Residues 21–173 constitute a propeptide, or 174 (in a minor form); the sequence is IILESGNINN…DEDPKKCEFR (153 aa). The Disintegrin; truncated domain occupies 168 to 207; the sequence is KKCEFRRAGTECRPARSECDVAEYCTGQSAECPTDVFHSN. Residues 179 to 192 form an inhibits platelet aggregation region; the sequence is CRPARSECDVAEYC. 9 cysteine pairs are disulfide-bonded: Cys179–Cys199, Cys186–Cys218, Cys192–Cys199, Cys211–Cys223, Cys230–Cys280, Cys245–Cys287, Cys258–Cys268, Cys275–Cys312, and Cys306–Cys317. A D/ECD-tripeptide motif is present at residues 185-187; sequence ECD. Residues Asp187 and Glu190 each contribute to the Ca(2+) site. The Ca(2+) site is built by Asp202 and Val203. A glycan (N-linked (GlcNAc...) asparagine) is linked at Asn237.

The protein belongs to the venom metalloproteinase (M12B) family. P-III subfamily. P-IIIe sub-subfamily. Monomer. Is able to form a homodimer. In terms of processing, N-glycosylated. Exists in at least six differently N-glycosylated forms. The glycans likely have a stabilizing purpose. Cys-199 forms a disulfide bond with Cys-192 in 90% and with Cys-179 in 10% of the protein molecules; alternative disulfide bonds may have a major effect on the conformation of the protein. In terms of tissue distribution, expressed by the venom gland (at protein level). Expressed by the venom gland.

Its subcellular location is the secreted. Activity may be regulated by the intramolecular thiol-disulfide exchange or disulfide bond switching. In terms of biological role, abolishes platelet aggregation induced by collagen, ADP (IC(50)=292 nM) and arachidonic-acid. The inhibition of collagen-induced platelet aggregation may be due to its ability to bind collagen and block the binding site on collagen for platelets and/or to its ability to bind to the platelet alpha-2/beta-1 collagen receptor (ITGA2/ITGB1) to block its interaction with collagen and hence prevent platelet stimulation. The inhibition of ADP- or arachidonic-acid-induced platelet aggregation may be due to it acting as an antagonist of the ADP receptors or thromboxane-prostanoid receptors of the platelets, respectively. Does not interact with integrins alpha-IIb (ITGA2B) or beta-3 (ITGB3) nor platelet glycoproteins VI (GP6) or IX (GP9) in vitro, however, the detection is dependent on experimental conditions and may happen in vivo. Able to bind to platelet glycoprotein Ib alpha chain (GP1BA) receptor in vitro, although this interaction may have pathologically only limited effect in vivo as it is not able to abolish the von Willebrand factor (vWF)-dependent platelet agglutination induced by ristocetin. Does not affect blood coagulation. This chain is Disintegrin-like/cysteine-rich protein MPIII-3, found in Vipera ammodytes ammodytes (Western sand viper).